The sequence spans 507 residues: Glycerol kinase (507 aa).

Position 15 (Thr15) interacts with ADP. ATP is bound by residues Thr15, Thr16, and Ser17. Thr15 provides a ligand contact to sn-glycerol 3-phosphate. Position 19 (Arg19) interacts with ADP. Positions 85, 86, 137, and 250 each coordinate sn-glycerol 3-phosphate. Residues Arg85, Glu86, Tyr137, Asp250, and Gln251 each coordinate glycerol. Residues Thr272 and Gly316 each coordinate ADP. ATP is bound by residues Thr272, Gly316, Gln320, and Gly417. Residue Gly417 coordinates ADP.

This sequence belongs to the FGGY kinase family.

It catalyses the reaction glycerol + ATP = sn-glycerol 3-phosphate + ADP + H(+). It functions in the pathway polyol metabolism; glycerol degradation via glycerol kinase pathway; sn-glycerol 3-phosphate from glycerol: step 1/1. Its activity is regulated as follows. Inhibited by fructose 1,6-bisphosphate (FBP). Functionally, key enzyme in the regulation of glycerol uptake and metabolism. Catalyzes the phosphorylation of glycerol to yield sn-glycerol 3-phosphate. This Mycoplasmopsis pulmonis (strain UAB CTIP) (Mycoplasma pulmonis) protein is Glycerol kinase.